The sequence spans 920 residues: 3-hydroxy-3-methylglutaryl-coenzyme A reductase (920 aa).

Residues 12–32 (FCASHPWEVIVALLTITACML) form a helical membrane-spanning segment. N-linked (GlcNAc...) asparagine glycosylation is present at Asn-37. The disordered stretch occupies residues 62–85 (GAGSGASGTIPPSSMGGSATSSRH). Polar residues predominate over residues 71–82 (IPPSSMGGSATS). In terms of domain architecture, SSD spans 106–263 (DVILMTIVRC…MTFYPACLSL (158 aa)). A run of 5 helical transmembrane segments spans residues 107–129 (VILM…CSLH), 136–156 (VLGI…TAII), 170–190 (LFFL…QLAL), 208–228 (LLGP…GVGT), and 237–257 (VLCM…MTFY). N-linked (GlcNAc...) asparagine glycosylation is found at Asn-342 and Asn-346. The chain crosses the membrane as a helical span at residues 364 to 384 (SADHIVISIVLIALVVKFICF). Residues 385 to 498 (DNRDPLPDQL…EEIVSIVHAG (114 aa)) are linker. Residues Asn-443 and Asn-475 are each glycosylated (N-linked (GlcNAc...) asparagine). The interval 499-829 (GTHCPLHKIE…TCTMPSLEVG (331 aa)) is catalytic. Active-site charge relay system residues include Glu-586, Lys-717, and Asp-793. 2 N-linked (GlcNAc...) asparagine glycosylation sites follow: Asn-797 and Asn-802. His-892 acts as the Proton donor in catalysis. Asn-896 and Asn-910 each carry an N-linked (GlcNAc...) asparagine glycan.

Belongs to the HMG-CoA reductase family. As to expression, highly expressed in embryonic gonadal mesoderm, where expression is initially broad, and then becomes restricted to a segmental pattern at stage 11. Expression is then further restricted to a cluster of cells in each of parasegments 10, 11 and 12, corresponding to the developing gonadal mesoderm. Not expressed in pole cells.

Its subcellular location is the endoplasmic reticulum membrane. It carries out the reaction (R)-mevalonate + 2 NADP(+) + CoA = (3S)-3-hydroxy-3-methylglutaryl-CoA + 2 NADPH + 2 H(+). Its pathway is metabolic intermediate biosynthesis; (R)-mevalonate biosynthesis; (R)-mevalonate from acetyl-CoA: step 3/3. The activity of HMG-CoA-reductase is suppressed by exogenous mevalonate. Functionally, synthesis of mevalonate for the production of non-sterol isoprenoids, which are essential for growth differentiation. Provides spatial information during embryogenesis to guide migrating primordial germ cells (the pole cells) from the ectoderm to the mesoderm. Also required for association of the pole cells with the gonadal mesoderm. The polypeptide is 3-hydroxy-3-methylglutaryl-coenzyme A reductase (Hmgcr) (Drosophila melanogaster (Fruit fly)).